Here is a 172-residue protein sequence, read N- to C-terminus: Calcium channel flower homolog (172 aa).

Topologically, residues methionine 1 to arginine 32 are cytoplasmic. The chain crosses the membrane as a helical span at residues leucine 33 to isoleucine 53. The Extracellular portion of the chain corresponds to histidine 54–asparagine 57. The helical transmembrane segment at isoleucine 58–phenylalanine 78 threads the bilayer. Topologically, residues cysteine 79 to alanine 102 are cytoplasmic. Residues valine 103–leucine 123 form a helical membrane-spanning segment. Topologically, residues glycine 124–asparagine 125 are extracellular. The chain crosses the membrane as a helical span at residues alanine 126–lysine 142. The Cytoplasmic portion of the chain corresponds to lysine 143–leucine 172.

Belongs to the calcium channel flower family. As to quaternary structure, interacts with adaptor protein complex 2 (AP-2). As to expression, detected in skin cells at low levels of expression (at protein level).

The protein localises to the cell membrane. The protein resides in the cytoplasmic vesicle. It localises to the secretory vesicle. It is found in the synaptic vesicle. Its subcellular location is the golgi apparatus. The protein localises to the vesicle. The protein resides in the early endosome. It localises to the recycling endosome. It is found in the endoplasmic reticulum membrane. Its function is as follows. Transmembrane protein which mediates synaptic endocytosis and fitness-based cell culling. In response to different stimulus strengths, controls two major modes of synaptic vesicle (SV) retrieval in hippocampal neurons; Clathrin-mediated endocytosis (CME) in response to mild stimulation and activity-dependent bulk endocytosis (ADBE) in response to strong stimulation. In cytotoxic T-lymphoocytes (CTLs) facilitates calcium-dependent endocytosis of cytotoxic granules at the immuno synapse. Different isoforms work as fitness fingerprints in 'loser' and 'winner' cells and thereby mediate win/lose decisions as part of the cell competition process. In terms of biological role, functions with the other flower isoforms to produce tissue-specific fitness fingerprints that identify unfit or fit cells during cell selection processes in order to maintain tissue health. During cell competition, if levels of this isoform in cells is higher than in the surrounding neighboring cells, the cells are recognized as 'winner' cells, and do not undergo elimination via apoptosis. Functionally, functions with the other flower isoforms to produce tissue-specific fitness fingerprints that identify unfit or fit cells during cell selection processes in order to maintain tissue health. During cell competition, if levels of this isoform in unfit cells is higher than in the surrounding neighboring cells, the cells are recognized as 'loser' cells, and undergo elimination via apoptosis to be replaced by the surrounding healthy 'winner' cell population. This is Calcium channel flower homolog (CACFD1) from Homo sapiens (Human).